A 142-amino-acid polypeptide reads, in one-letter code: Prefoldin subunit alpha (142 aa).

It belongs to the prefoldin subunit alpha family. In terms of assembly, heterohexamer of two alpha and four beta subunits.

It is found in the cytoplasm. Its function is as follows. Molecular chaperone capable of stabilizing a range of proteins. Seems to fulfill an ATP-independent, HSP70-like function in archaeal de novo protein folding. In Methanosarcina acetivorans (strain ATCC 35395 / DSM 2834 / JCM 12185 / C2A), this protein is Prefoldin subunit alpha.